We begin with the raw amino-acid sequence, 491 residues long: Cobyric acid synthase (491 aa).

The 190-residue stretch at 250 to 439 (EVTIAVIRLP…LHGIFDNGAW (190 aa)) folds into the GATase cobBQ-type domain. Cysteine 331 functions as the Nucleophile in the catalytic mechanism. Residue histidine 431 is part of the active site.

This sequence belongs to the CobB/CobQ family. CobQ subfamily.

Its pathway is cofactor biosynthesis; adenosylcobalamin biosynthesis. Its function is as follows. Catalyzes amidations at positions B, D, E, and G on adenosylcobyrinic A,C-diamide. NH(2) groups are provided by glutamine, and one molecule of ATP is hydrogenolyzed for each amidation. The chain is Cobyric acid synthase from Synechococcus elongatus (strain ATCC 33912 / PCC 7942 / FACHB-805) (Anacystis nidulans R2).